Here is a 428-residue protein sequence, read N- to C-terminus: Protein terminus (428 aa).

The segment at 325-346 adopts a C3H1-type zinc-finger fold; the sequence is CRRCRTQFSRRSKLHIHQKLRC.

The chain is Protein terminus (term) from Drosophila melanogaster (Fruit fly).